Reading from the N-terminus, the 857-residue chain is A-kinase anchor protein 1, mitochondrial (857 aa).

Residues 1–29 (MAIQLRSLFPLALPGMLALLGWWWFFSRK) constitute a mitochondrion transit peptide. A Phosphoserine modification is found at S55. A disordered region spans residues 65–121 (VAPTVTQPPGREEQRCVDKPSTEPLALPRTRQVRRRSESSGNLPSVADTRSQPGPCR). Residues 74–85 (GREEQRCVDKPS) are compositionally biased toward basic and acidic residues. Phosphoserine occurs at positions 101, 103, and 164. Positions 103–116 (SSGNLPSVADTRSQ) are enriched in polar residues. 2 disordered regions span residues 165 to 198 (ALGKTPGRGWPSPYAASGEKARETGGTEGTGDAV) and 260 to 303 (FVEP…VPEN). Residues 286-299 (SDRDLAGELDKDET) show a composition bias toward basic and acidic residues. Residues 306–319 (IKQAAFQLISQVIL) are PKA-RII subunit binding domain. Disordered regions lie at residues 336–437 (QVHP…NPRG), 466–497 (STSGLEDSCTETISSSGDKAMTPPLPVSTQPF), and 512–554 (EDGW…QAGS). Over residues 354–379 (PASQETSLGQDTSDPASTRTGATASP) the composition is skewed to polar residues. Position 401 is a phosphothreonine (T401). Residues 466-482 (STSGLEDSCTETISSSG) show a composition bias toward polar residues. The residue at position 487 (T487) is a Phosphothreonine. A phosphoserine mark is found at S527 and S546. Positions 545–554 (DSPQSVQAGS) are enriched in polar residues. Positions 561-625 (LIIWEIEVPK…HHVDKALNLI (65 aa)) constitute a KH domain. Residues 712 to 771 (PVEITVICAAPGADGAWWRAQVVASYEETNEVEIRYVDYGGYKRVKVDVLRQIRSDFVTL) enclose the Tudor domain.

Interacts with SLC8A3. Interacts with CFAP91. Interacts with CLPB. Interacts with NDUFS1. Highest expression in testis, heart, liver, skeletal muscle, intestine and kidney, followed by brain and lung. No expression in spleen. Isoform 1/D-AKAP1A is expressed predominantly in testis whereas isoform 4/D-AKAP1D is expressed primarily in liver. Expression is decreased in hearts of diabetic mice (at protein level).

The protein localises to the mitochondrion outer membrane. It localises to the mitochondrion. Its subcellular location is the endoplasmic reticulum. Its function is as follows. Differentially targeted protein that binds to type I and II regulatory subunits of protein kinase A. Anchors them to the cytoplasmic face of the mitochondrial outer membrane or allows them to reside in the endoplasmic reticulum. Involved in mitochondrial-mediated antiviral innate immunity. Promotes translocation of NDUFS1 into mitochondria to regulate mitochondrial membrane respiratory chain NADH dehydrogenase (Complex I) activity. Under diabetic conditions, myocardial AKAP1 expression decreases which blocks the translocation of NDUFS1 from the cytosol to mitochondria. Reduction of NDUFS1 in mitochondria decreases ATP production and increases mitochondrial ROS level, which causes mitochondrial dysfunction and cell apoptosis, respectively, thereby leading to cardiac dysfunction. The polypeptide is A-kinase anchor protein 1, mitochondrial (Mus musculus (Mouse)).